The sequence spans 373 residues: Anhydro-N-acetylmuramic acid kinase (373 aa).

An ATP-binding site is contributed by 12–19; the sequence is GTSLDGVD.

This sequence belongs to the anhydro-N-acetylmuramic acid kinase family.

The catalysed reaction is 1,6-anhydro-N-acetyl-beta-muramate + ATP + H2O = N-acetyl-D-muramate 6-phosphate + ADP + H(+). Its pathway is amino-sugar metabolism; 1,6-anhydro-N-acetylmuramate degradation. It functions in the pathway cell wall biogenesis; peptidoglycan recycling. In terms of biological role, catalyzes the specific phosphorylation of 1,6-anhydro-N-acetylmuramic acid (anhMurNAc) with the simultaneous cleavage of the 1,6-anhydro ring, generating MurNAc-6-P. Is required for the utilization of anhMurNAc either imported from the medium or derived from its own cell wall murein, and thus plays a role in cell wall recycling. The polypeptide is Anhydro-N-acetylmuramic acid kinase (Serratia proteamaculans (strain 568)).